Consider the following 94-residue polypeptide: UPF0235 protein Dred_0717 (94 aa).

Belongs to the UPF0235 family.

The sequence is that of UPF0235 protein Dred_0717 from Desulforamulus reducens (strain ATCC BAA-1160 / DSM 100696 / MI-1) (Desulfotomaculum reducens).